The primary structure comprises 313 residues: Small ribosomal subunit biogenesis GTPase RsgA (313 aa).

Positions 80-237 (KVALRQVIVS…LIDTPGIKEF (158 aa)) constitute a CP-type G domain. GTP is bound by residues 129 to 132 (NKVD) and 180 to 188 (GQSGVGKSS). The Zn(2+) site is built by cysteine 261, cysteine 266, histidine 268, and cysteine 274.

It belongs to the TRAFAC class YlqF/YawG GTPase family. RsgA subfamily. Monomer. Associates with 30S ribosomal subunit, binds 16S rRNA. Zn(2+) is required as a cofactor.

The protein localises to the cytoplasm. Functionally, one of several proteins that assist in the late maturation steps of the functional core of the 30S ribosomal subunit. Helps release RbfA from mature subunits. May play a role in the assembly of ribosomal proteins into the subunit. Circularly permuted GTPase that catalyzes slow GTP hydrolysis, GTPase activity is stimulated by the 30S ribosomal subunit. The protein is Small ribosomal subunit biogenesis GTPase RsgA of Borrelia recurrentis (strain A1).